A 662-amino-acid polypeptide reads, in one-letter code: UvrABC system protein B (662 aa).

One can recognise a Helicase ATP-binding domain in the interval 25-414 (AGLNSKKRSQ…GTVVELIIRP (390 aa)). 38-45 (GITGSGKT) is an ATP binding site. Residues 91–114 (YYDYYQPEAYIVRTDTFIEKDSSI) carry the Beta-hairpin motif. The Helicase C-terminal domain occupies 430-592 (QVEDLISEIQ…IIPKTINSAI (163 aa)). In terms of domain architecture, UVR spans 622–657 (KSYMDKLKKEMFKAASNLEFEQAAKLRNQLKTLEKA).

This sequence belongs to the UvrB family. In terms of assembly, forms a heterotetramer with UvrA during the search for lesions. Interacts with UvrC in an incision complex.

The protein resides in the cytoplasm. Its function is as follows. The UvrABC repair system catalyzes the recognition and processing of DNA lesions. A damage recognition complex composed of 2 UvrA and 2 UvrB subunits scans DNA for abnormalities. Upon binding of the UvrA(2)B(2) complex to a putative damaged site, the DNA wraps around one UvrB monomer. DNA wrap is dependent on ATP binding by UvrB and probably causes local melting of the DNA helix, facilitating insertion of UvrB beta-hairpin between the DNA strands. Then UvrB probes one DNA strand for the presence of a lesion. If a lesion is found the UvrA subunits dissociate and the UvrB-DNA preincision complex is formed. This complex is subsequently bound by UvrC and the second UvrB is released. If no lesion is found, the DNA wraps around the other UvrB subunit that will check the other stand for damage. The chain is UvrABC system protein B from Rickettsia typhi (strain ATCC VR-144 / Wilmington).